The sequence spans 442 residues: Probable glycine dehydrogenase (decarboxylating) subunit 1 (442 aa).

Belongs to the GcvP family. N-terminal subunit subfamily. The glycine cleavage system is composed of four proteins: P, T, L and H. In this organism, the P 'protein' is a heterodimer of two subunits.

It catalyses the reaction N(6)-[(R)-lipoyl]-L-lysyl-[glycine-cleavage complex H protein] + glycine + H(+) = N(6)-[(R)-S(8)-aminomethyldihydrolipoyl]-L-lysyl-[glycine-cleavage complex H protein] + CO2. The glycine cleavage system catalyzes the degradation of glycine. The P protein binds the alpha-amino group of glycine through its pyridoxal phosphate cofactor; CO(2) is released and the remaining methylamine moiety is then transferred to the lipoamide cofactor of the H protein. The protein is Probable glycine dehydrogenase (decarboxylating) subunit 1 of Geotalea daltonii (strain DSM 22248 / JCM 15807 / FRC-32) (Geobacter daltonii).